The chain runs to 741 residues: Catalase-peroxidase (741 aa).

Positions 1–21 are cleaved as a signal peptide; sequence MRNFRRFTIALLVLFLGPIGA. The tryptophyl-tyrosyl-methioninium (Trp-Tyr) (with M-257) cross-link spans 109-231; that stretch reads WHSAGTYRIS…LAAVQMGLIY (123 aa). The Proton acceptor role is filled by H110. The segment at residues 231–257 is a cross-link (tryptophyl-tyrosyl-methioninium (Tyr-Met) (with W-109)); sequence YVNPEGPNGNPDPLAAAKDIRETFGRM. H272 contacts heme b.

This sequence belongs to the peroxidase family. Peroxidase/catalase subfamily. As to quaternary structure, homodimer or homotetramer. It depends on heme b as a cofactor. In terms of processing, formation of the three residue Trp-Tyr-Met cross-link is important for the catalase, but not the peroxidase activity of the enzyme.

It catalyses the reaction H2O2 + AH2 = A + 2 H2O. The catalysed reaction is 2 H2O2 = O2 + 2 H2O. Its function is as follows. Bifunctional enzyme with both catalase and broad-spectrum peroxidase activity. This is Catalase-peroxidase from Leptospira biflexa serovar Patoc (strain Patoc 1 / Ames).